The primary structure comprises 876 residues: Leucine--tRNA ligase (876 aa).

A 'HIGH' region motif is present at residues 43–53; it reads PYPSGRIHMGH. Positions 632-636 match the 'KMSKS' region motif; that stretch reads KMSKS. ATP is bound at residue Lys635.

It belongs to the class-I aminoacyl-tRNA synthetase family.

The protein resides in the cytoplasm. The catalysed reaction is tRNA(Leu) + L-leucine + ATP = L-leucyl-tRNA(Leu) + AMP + diphosphate. This chain is Leucine--tRNA ligase, found in Sinorhizobium medicae (strain WSM419) (Ensifer medicae).